A 977-amino-acid chain; its full sequence is Ephrin type-A receptor 2 (977 aa).

The N-terminal stretch at 1–25 (MELRAVGFCLALLWGCALAAAAAQG) is a signal peptide. The interval 1–205 (MELRAVGFCL…YYKKCPEMLQ (205 aa)) is mediates interaction with CLDN4. Residues 26–538 (KEVVLLDFAA…STEGSANMAV (513 aa)) are Extracellular-facing. An Eph LBD domain is found at 27–205 (EVVLLDFAAM…YYKKCPEMLQ (179 aa)). 2 disulfides stabilise this stretch: Cys-69–Cys-187 and Cys-104–Cys-114. The 105-residue stretch at 329–433 (PPSAPNYLTA…TSRSFRTASV (105 aa)) folds into the Fibronectin type-III 1 domain. Residues Asn-408 and Asn-436 are each glycosylated (N-linked (GlcNAc...) asparagine). Positions 439-530 (EPPKVRLEDR…KVHEFQTLST (92 aa)) constitute a Fibronectin type-III 2 domain. A helical transmembrane segment spans residues 539–559 (IGGVAVGVVLLLVLAGVGLFI). Residues 560–977 (HRRRRNLRAR…DQVNTVGIPI (418 aa)) are Cytoplasmic-facing. Ser-571 and Ser-580 each carry phosphoserine. Tyr-589 and Tyr-595 each carry phosphotyrosine; by autocatalysis. The interval 607–907 (TEIHPSCVAR…STSGSEGVPF (301 aa)) is mediates interaction with ARHGEF16. The region spanning 614 to 876 (VARQKVIGAG…DIVSILDKLI (263 aa)) is the Protein kinase domain. ATP is bound at residue 620 to 628 (IGAGEFGEV). Tyr-629 bears the Phosphotyrosine mark. Residue Lys-647 participates in ATP binding. Thr-648 is modified (phosphothreonine). Tyr-736 carries the phosphotyrosine; by autocatalysis modification. Asp-740 serves as the catalytic Proton acceptor. Tyr-773 carries the phosphotyrosine; by autocatalysis modification. 4 positions are modified to phosphoserine: Ser-870, Ser-893, Ser-898, and Ser-902. A negatively regulates interaction with ARHGEF16 region spans residues 887–977 (DFDPRVSIRL…DQVNTVGIPI (91 aa)). The SAM domain maps to 905–969 (VPFRTVSEWL…AYSLLGLKDQ (65 aa)). At Tyr-922 the chain carries Phosphotyrosine; by autocatalysis. At Tyr-931 the chain carries Phosphotyrosine. The short motif at 975–977 (IPI) is the PDZ-binding element.

The protein belongs to the protein kinase superfamily. Tyr protein kinase family. Ephrin receptor subfamily. Homodimer. Interacts with INPPL1; regulates activated EPHA2 endocytosis and degradation. Interacts (inactivated form) with PTK2/FAK1 and interacts (EFNA1 ligand-activated form) with PTPN11; regulates integrin-mediated adhesion. Interacts with ARHGEF16, DOCK4 and ELMO2; mediates ligand-independent activation of RAC1 which stimulates cell migration. Interacts with CLDN4; phosphorylates CLDN4 and may regulate tight junctions. Interacts with ACP1. Interacts with CEMIP. Interacts with NCK1; may regulate EPHA2 activity in cell migration and adhesion. Interacts with SLA. Interacts (phosphorylated form) with VAV2, VAV3 and PI3-kinase p85 subunit (PIK3R1, PIK3R2 or PIK3R3); critical for the EFNA1-induced activation of RAC1 which stimulates cell migration. Interacts with ANKS1A. Interacts with TIMD4. Autophosphorylates. Phosphorylated at Ser-898 by PKB; serum-induced phosphorylation which targets EPHA2 to the cell leading edge and stimulates cell migration. Phosphorylation by PKB is inhibited by EFNA1-activated EPHA2 which regulates PKB activity via a reciprocal regulatory loop. Phosphorylated on tyrosine upon binding and activation by EFNA1. Phosphorylated residues Tyr-589 and Tyr-595 are required for binding VAV2 and VAV3 while phosphorylated residues Tyr-736 and Tyr-931 are required for binding PI3-kinase p85 subunit (PIK3R1, PIK3R2 or PIK3R3). These phosphorylated residues are critical for recruitment of VAV2 and VAV3 and PI3-kinase p85 subunit which transduce downstream signaling to activate RAC1 GTPase and cell migration. Dephosphorylation of Tyr-931 by PTPRF prevents the interaction of EPHA2 with NCK1. Phosphorylated at Ser-898 in response to TNF by RPS6KA1 and RPS6KA3; RPS6KA-EPHA2 signaling pathway controls cell migration. Phosphorylated at Ser-898 by PKA; blocks cell retraction induced by EPHA2 kinase activity. Dephosphorylated by ACP1. Post-translationally, ubiquitinated by CHIP/STUB1. Ubiquitination is regulated by the HSP90 chaperone and regulates the receptor stability and activity through proteasomal degradation. ANKS1A prevents ubiquitination and degradation. Expressed in the lung, intestine and liver. Expressed in myogenic progenitor cells.

Its subcellular location is the cell membrane. The protein resides in the cell projection. It is found in the ruffle membrane. It localises to the lamellipodium membrane. The protein localises to the cell junction. Its subcellular location is the focal adhesion. It catalyses the reaction L-tyrosyl-[protein] + ATP = O-phospho-L-tyrosyl-[protein] + ADP + H(+). Receptor tyrosine kinase which binds promiscuously membrane-bound ephrin-A family ligands residing on adjacent cells, leading to contact-dependent bidirectional signaling into neighboring cells. The signaling pathway downstream of the receptor is referred to as forward signaling while the signaling pathway downstream of the ephrin ligand is referred to as reverse signaling. Activated by the ligand ephrin-A1/EFNA1 regulates migration, integrin-mediated adhesion, proliferation and differentiation of cells. Regulates cell adhesion and differentiation through DSG1/desmoglein-1 and inhibition of the ERK1/ERK2 signaling pathway. May also participate in UV radiation-induced apoptosis and have a ligand-independent stimulatory effect on chemotactic cell migration. During development, may function in distinctive aspects of pattern formation and subsequently in development of several fetal tissues. Involved for instance in angiogenesis, in early hindbrain development and epithelial proliferation and branching morphogenesis during mammary gland development. Engaged by the ligand ephrin-A5/EFNA5 may regulate lens fiber cells shape and interactions and be important for lens transparency development and maintenance. With ephrin-A2/EFNA2 may play a role in bone remodeling through regulation of osteoclastogenesis and osteoblastogenesis. This Mus musculus (Mouse) protein is Ephrin type-A receptor 2 (Epha2).